A 296-amino-acid chain; its full sequence is UPF0761 membrane protein YE0031 (296 aa).

The next 7 helical transmembrane spans lie at 44–64, 67–87, 108–128, 136–156, 185–205, 212–232, and 246–266; these read LLSL…FPMF, ISIK…GDII, GLIV…NIIW, LVFS…LVGA, LFPL…VPTV, ALIG…GFTM, and VLAV…IVLL.

The protein belongs to the UPF0761 family.

It is found in the cell inner membrane. This chain is UPF0761 membrane protein YE0031, found in Yersinia enterocolitica serotype O:8 / biotype 1B (strain NCTC 13174 / 8081).